The sequence spans 1322 residues: Flocculation protein FLO9 (1322 aa).

The first 24 residues, 1–24, serve as a signal peptide directing secretion; that stretch reads MSLAHYCLLLAIVTLLGLTNVVSA. Residues 74-249 enclose the PA14 domain; sequence GGQTDISIDY…GTTVSDDFEG (176 aa). N135, N187, N203, N257, N262, and N270 each carry an N-linked (GlcNAc...) asparagine glycan. Residues 197 to 240 form a sugar recognition region; the sequence is NGSPPDNITGTVYMYAGFYYPMKIVYSNAVAWGTLPISVTLPDG. Tandem repeats lie at residues 278–322, 323–367, 368–412, 413–457, 458–502, 503–547, 548–592, 593–637, 638–682, 683–727, 728–772, 773–817, and 818–862. The segment at 278–862 is 13 X 45 AA approximate tandem repeats, Thr-rich; the sequence is TTTEPWTGTF…KTPTTAISSS (585 aa). N-linked (GlcNAc...) asparagine glycosylation occurs at N329. N-linked (GlcNAc...) asparagine glycosylation is found at N419, N464, N509, N554, N599, N644, N689, and N734. Disordered regions lie at residues 770 to 799 and 816 to 843; these read LISTTTEPWTGTFTSTSTEMTTVTGTNGQP and VTTTTEPWTGTFTSTSTEMTTITGTNGQ. Low complexity-rich tracts occupy residues 773–795 and 817–840; these read TTTEPWTGTFTSTSTEMTTVTGT and TTTTEPWTGTFTSTSTEMTTITGT. N888 carries an N-linked (GlcNAc...) asparagine glycan. A run of 3 repeats spans residues 892 to 906, 907 to 921, and 922 to 936. The interval 892–936 is 3 X 15 AA approximate repeats, Ser-rich; sequence VISSSVISSSDTSSLVISSSVTSSLVTSSPVISSSFISSPVISST. Positions 950 to 1001 are enriched in low complexity; the sequence is SVIPTSSSTSGSSESETGSASSASSSSSISSESPKSTYSSSSLPPVTSATTS. Residues 950 to 1018 are disordered; the sequence is SVIPTSSSTS…PPVTTTKTSE (69 aa). A compositionally biased stretch (polar residues) spans 1002–1018; that stretch reads QEITSSLPPVTTTKTSE. 3 tandem repeats follow at residues 1013-1063, 1085-1135, and 1136-1186. Residues 1013-1186 form a 3 X 51 AA approximate repeats, Thr-rich region; the sequence is TTKTSEQTTL…TVYSTWRPQT (174 aa). Positions 1186–1196 are enriched in polar residues; sequence TTNEQSVSSKM. 2 disordered regions span residues 1186-1221 and 1256-1284; these read TTNEQSVSSKMNSATSETTTNTGAAETTTSTGAAET and SETGNTKSLTSSGLSTMSQQPRSTPASSM. Over residues 1197-1221 the composition is skewed to low complexity; it reads NSATSETTTNTGAAETTTSTGAAET. Over residues 1257–1284 the composition is skewed to polar residues; that stretch reads ETGNTKSLTSSGLSTMSQQPRSTPASSM. G1299 carries GPI-anchor amidated glycine lipidation. Positions 1300–1322 are cleaved as a propeptide — removed in mature form; that stretch reads SANSLLAGSGLSVFIASLLLAII.

The protein belongs to the flocculin family. In terms of processing, the GPI-anchor is attached to the protein in the endoplasmic reticulum and serves to target the protein to the cell surface. There, the glucosamine-inositol phospholipid moiety is cleaved off and the GPI-modified mannoprotein is covalently attached via its lipidless GPI glycan remnant to the 1,6-beta-glucan of the outer cell wall layer.

Its subcellular location is the secreted. The protein localises to the cell wall. It is found in the membrane. Functionally, cell wall protein that participates directly in adhesive cell-cell interactions during yeast flocculation, a reversible, asexual and Ca(2+)-dependent process in which cells adhere to form aggregates (flocs) consisting of thousands of cells. The lectin-like protein sticks out of the cell wall of flocculent cells and selectively binds mannose residues in the cell walls of adjacent cells. This chain is Flocculation protein FLO9 (FLO9), found in Saccharomyces cerevisiae (strain ATCC 204508 / S288c) (Baker's yeast).